Consider the following 343-residue polypeptide: Thromboxane A2 receptor (343 aa).

The Extracellular segment spans residues 1–29; that stretch reads MWPNGSSLGPCFRPTNITLEERRLIASPW. N-linked (GlcNAc...) asparagine glycans are attached at residues Asn4 and Asn16. Residues 30-52 form a helical membrane-spanning segment; that stretch reads FAASFCVVGLASNLLALSVLAGA. At 53-66 the chain is on the cytoplasmic side; that stretch reads RQGGSHTRSSFLTF. A helical membrane pass occupies residues 67–87; the sequence is LCGLVLTDFLGLLVTGAIVVS. At 88–106 the chain is on the extracellular side; sequence QHAALFEWHAVDPGCRLCR. Cys105 and Cys183 are disulfide-bonded. A helical transmembrane segment spans residues 107 to 128; the sequence is FMGVVMIFFGLSPLLLGATMAS. The Cytoplasmic segment spans residues 129–149; the sequence is ERFLGITRPFSRPVVTSQRRA. Residues 150-172 form a helical membrane-spanning segment; that stretch reads WATVGLVWAAALALGLLPLLGLG. Residues 173 to 193 lie on the Extracellular side of the membrane; it reads RYTVQYPGSWCFLTLGAESGD. A helical membrane pass occupies residues 194–219; the sequence is VAFGLLFSMLGGLSVGLSFLLNTVSV. Residues 220–246 lie on the Cytoplasmic side of the membrane; that stretch reads ATLCHVYHGQEAAQQRPRDSEVEMMAQ. A helical membrane pass occupies residues 247 to 270; that stretch reads LLGIMLVASVCWLPLLVFIAQTVL. Topologically, residues 271–289 are extracellular; that stretch reads RNPPAMSPSGQLSRATEQE. The chain crosses the membrane as a helical span at residues 290–311; it reads LLIYLRVATWNQILDPWVYILF. Residues 312–343 lie on the Cytoplasmic side of the membrane; that stretch reads RRAVLRRLQPRLSTRPRSLSLQPQLTQRSGLQ. A phosphoserine mark is found at Ser329 and Ser331.

It belongs to the G-protein coupled receptor 1 family. In terms of assembly, interacts with RPGRIP1L. Interacts with RACK1; the interaction regulates TBXA2R cell surface expression.

The protein localises to the cell membrane. Functionally, receptor for thromboxane A2 (TXA2), a potent stimulator of platelet aggregation. The activity of this receptor is mediated by a G-protein that activates a phosphatidylinositol-calcium second messenger system. In the kidney, the binding of TXA2 to glomerular TP receptors causes intense vasoconstriction. Activates phospholipase C and adenylyl cyclase. The protein is Thromboxane A2 receptor (TBXA2R) of Chlorocebus aethiops (Green monkey).